The primary structure comprises 1615 residues: ABC transporter A family member 4 (1615 aa).

A run of 7 helical transmembrane segments spans residues 30–50 (ILLP…SMII), 233–253 (GVFI…NIVI), 278–298 (SIIS…ILSA), 308–328 (ITLI…AFIL), 337–357 (YAGL…IIIG), 365–385 (LKLL…YVWC), and 405–425 (YEII…LWYL). One can recognise an ABC transmembrane type-2 domain in the interval 182–383 (TQIQTGVDQA…PIAISVANYV (202 aa)). The ABC transporter 1 domain maps to 492 to 727 (ISIRNLRKEF…FGVGYLLTIS (236 aa)). 528–535 (GPNGSGKS) contacts ATP. 7 helical membrane passes run 855–875 (IKSF…GLIL), 1022–1042 (FVAI…IAAS), 1075–1095 (IWDY…IIAV), 1106–1126 (YISG…LMSF), 1135–1155 (VGAI…ISFI), 1174–1194 (IIEY…ILAI), and 1218–1238 (LLPN…ILLI). In terms of domain architecture, ABC transporter 2 spans 1293 to 1528 (IIFNNLYKKF…FGSGYSIEVK (236 aa)). ATP is bound at residue 1331 to 1338 (GLNGCGKS).

It belongs to the ABC transporter superfamily. ABCA family.

The protein resides in the membrane. The protein is ABC transporter A family member 4 (abcA4) of Dictyostelium discoideum (Social amoeba).